The following is a 209-amino-acid chain: Ras-related protein Rab-2-A (209 aa).

A GTP-binding site is contributed by 13–21 (GDTGVGKSC). The short motif at 35–43 (HDLTIGVEF) is the Effector region element. Residues 61 to 65 (DTAGQ), 119 to 122 (NKCD), and 149 to 151 (SAK) each bind GTP. Residues C207 and C208 are each lipidated (S-geranylgeranyl cysteine).

This sequence belongs to the small GTPase superfamily. Rab family.

The protein resides in the endoplasmic reticulum membrane. It is found in the golgi apparatus membrane. Functionally, protein transport. Probably involved in vesicular traffic. This chain is Ras-related protein Rab-2-A (RAB2A), found in Zea mays (Maize).